Here is a 100-residue protein sequence, read N- to C-terminus: Large ribosomal subunit protein uL23 (100 aa).

Belongs to the universal ribosomal protein uL23 family. As to quaternary structure, part of the 50S ribosomal subunit. Contacts protein L29, and trigger factor when it is bound to the ribosome.

Its function is as follows. One of the early assembly proteins it binds 23S rRNA. One of the proteins that surrounds the polypeptide exit tunnel on the outside of the ribosome. Forms the main docking site for trigger factor binding to the ribosome. The polypeptide is Large ribosomal subunit protein uL23 (Buchnera aphidicola subsp. Baizongia pistaciae (strain Bp)).